The sequence spans 223 residues: Pyridoxine/pyridoxamine 5'-phosphate oxidase (223 aa).

Residues 13–16 and Lys-73 each bind substrate; that span reads RKNY. FMN-binding positions include 68 to 73, 83 to 84, Lys-90, and Gln-112; these read RIVLLK and YT. 3 residues coordinate substrate: Tyr-130, Arg-134, and Ser-138. Residues 147–148 and Trp-193 each bind FMN; that span reads QS. Residue 199–201 participates in substrate binding; that stretch reads RLH. Position 203 (Arg-203) interacts with FMN.

Belongs to the pyridoxamine 5'-phosphate oxidase family. As to quaternary structure, homodimer. It depends on FMN as a cofactor.

The catalysed reaction is pyridoxamine 5'-phosphate + O2 + H2O = pyridoxal 5'-phosphate + H2O2 + NH4(+). It catalyses the reaction pyridoxine 5'-phosphate + O2 = pyridoxal 5'-phosphate + H2O2. It participates in cofactor metabolism; pyridoxal 5'-phosphate salvage; pyridoxal 5'-phosphate from pyridoxamine 5'-phosphate: step 1/1. It functions in the pathway cofactor metabolism; pyridoxal 5'-phosphate salvage; pyridoxal 5'-phosphate from pyridoxine 5'-phosphate: step 1/1. In terms of biological role, catalyzes the oxidation of either pyridoxine 5'-phosphate (PNP) or pyridoxamine 5'-phosphate (PMP) into pyridoxal 5'-phosphate (PLP). The sequence is that of Pyridoxine/pyridoxamine 5'-phosphate oxidase from Rhodopirellula baltica (strain DSM 10527 / NCIMB 13988 / SH1).